Here is a 225-residue protein sequence, read N- to C-terminus: Riboflavin kinase (225 aa).

The segment at 1–89 (MPDIKYLKKL…SRIFSPDLDI (89 aa)) is unknown. A riboflavin kinase region spans residues 90-225 (LELEGKVLKG…LKKQGTENQK (136 aa)). 99 to 104 (GLGEGQ) contacts CDP. Positions 128 and 130 each coordinate Mg(2+). The FMN site is built by threonine 185 and glutamate 193. 198–201 (IKLR) is a binding site for CDP.

The protein belongs to the archaeal riboflavin kinase family. Requires Mg(2+) as cofactor.

The enzyme catalyses riboflavin + CTP = CDP + FMN + H(+). It functions in the pathway cofactor biosynthesis; FMN biosynthesis; FMN from riboflavin (CTP route): step 1/1. In terms of biological role, catalyzes the CTP-dependent phosphorylation of riboflavin (vitamin B2) to form flavin mononucleotide (FMN). The polypeptide is Riboflavin kinase (ribK) (Methanosarcina barkeri (strain Fusaro / DSM 804)).